The primary structure comprises 157 residues: UPF0303 protein NT01EI_1570 (157 aa).

Belongs to the UPF0303 family.

The sequence is that of UPF0303 protein NT01EI_1570 from Edwardsiella ictaluri (strain 93-146).